The chain runs to 457 residues: MALWGGRFSQAADQRFKQFNDSLRFDYRLAEQDIVGSIGWSKALVTVNVLSEQEQQQLEQALDALLVEVQADPEMILQSDAEDIHSWVELRLIEKVGDLGKKLHTGRSRNDQVATDLKLWCKAQIAELLLSVRQLRQALVTTAEANQDAVMPGYTHLQRAQPVTFAHWCLAYHEMLTRDESRLEDTLKRLDVSPLGCGALAGTAYPIDREQLADWLGFASATRNSLDTVSDRDHVLELLSNASIGMVHLSRFAEDLIFFNSGEAAFVELSDRVTSGSSLMPQKKNPDALELIRGKCGRVQGALTGMMMTLKGLPLAYNKDMQEDKEGLFDALDTWHDCLMMAGLVLEGIQVKRPRCKEAAEQGYANSTELADYLVAKGVPFREAHHIVGEAVVEAIRQGKALEALPLADLQKFSAVIGDDVYPILALQSCLDKRAAQGGVSPQQVAKAISDAKQRLA.

Belongs to the lyase 1 family. Argininosuccinate lyase subfamily.

Its subcellular location is the cytoplasm. The enzyme catalyses 2-(N(omega)-L-arginino)succinate = fumarate + L-arginine. It participates in amino-acid biosynthesis; L-arginine biosynthesis; L-arginine from L-ornithine and carbamoyl phosphate: step 3/3. The sequence is that of Argininosuccinate lyase from Pectobacterium atrosepticum (strain SCRI 1043 / ATCC BAA-672) (Erwinia carotovora subsp. atroseptica).